The following is a 239-amino-acid chain: Ribose-5-phosphate isomerase A (239 aa).

Substrate contacts are provided by residues serine 40–threonine 43, aspartate 96–aspartate 99, and lysine 110–glycine 113. Glutamate 119 functions as the Proton acceptor in the catalytic mechanism. Lysine 137 contacts substrate.

Belongs to the ribose 5-phosphate isomerase family. As to quaternary structure, homodimer.

The catalysed reaction is aldehydo-D-ribose 5-phosphate = D-ribulose 5-phosphate. The protein operates within carbohydrate degradation; pentose phosphate pathway; D-ribose 5-phosphate from D-ribulose 5-phosphate (non-oxidative stage): step 1/1. Catalyzes the reversible conversion of ribose-5-phosphate to ribulose 5-phosphate. The protein is Ribose-5-phosphate isomerase A of Methanococcus maripaludis (strain C5 / ATCC BAA-1333).